A 1365-amino-acid chain; its full sequence is Killer toxin-resistance protein 5 (1365 aa).

An N-terminal signal peptide occupies residues 1 to 17 (MRLLALVLLLLCAPLRA). Residues Asn115, Asn228, Asn293, Asn457, Asn519, Asn523, Asn644, Asn870, Asn1091, Asn1150, and Asn1195 are each glycosylated (N-linked (GlcNAc...) asparagine). Positions 1334–1365 (FASSPGDEDVPGESVSSKYQDSDNAAPLHDEL) are disordered. The segment covering 1347-1356 (SVSSKYQDSD) has biased composition (polar residues). Residues 1362–1365 (HDEL) carry the Prevents secretion from ER motif.

It to D.melanogaster UGGG.

The protein localises to the endoplasmic reticulum lumen. Required for (1-&gt;6)-beta-D-glucan synthesis and normal cell growth. The protein is Killer toxin-resistance protein 5 (KRE5) of Saccharomyces cerevisiae (strain ATCC 204508 / S288c) (Baker's yeast).